Reading from the N-terminus, the 125-residue chain is Small ribosomal subunit protein eS8 (125 aa).

Residues 1–36 (MKDQGRSTRKRTGGRLHDVSKKKRHQLGREPAETTV) form a disordered region. Residues 7 to 26 (STRKRTGGRLHDVSKKKRHQ) are compositionally biased toward basic residues. Residues 27-36 (LGREPAETTV) are compositionally biased toward basic and acidic residues.

Belongs to the eukaryotic ribosomal protein eS8 family. As to quaternary structure, part of the 30S ribosomal subunit.

This is Small ribosomal subunit protein eS8 from Haloquadratum walsbyi (strain DSM 16790 / HBSQ001).